A 227-amino-acid chain; its full sequence is 2,3-bisphosphoglycerate-dependent phosphoglycerate mutase (227 aa).

Substrate contacts are provided by residues 8–15 (RHGKSVWN), 21–22 (TG), Arg58, 110–113 (ERMY), Lys121, 137–138 (RR), and 181–182 (GN). His9 serves as the catalytic Tele-phosphohistidine intermediate. The Proton donor/acceptor role is filled by Glu110.

The protein belongs to the phosphoglycerate mutase family. BPG-dependent PGAM subfamily.

It catalyses the reaction (2R)-2-phosphoglycerate = (2R)-3-phosphoglycerate. The protein operates within carbohydrate degradation; glycolysis; pyruvate from D-glyceraldehyde 3-phosphate: step 3/5. In terms of biological role, catalyzes the interconversion of 2-phosphoglycerate and 3-phosphoglycerate. This chain is 2,3-bisphosphoglycerate-dependent phosphoglycerate mutase, found in Chlamydia felis (strain Fe/C-56) (Chlamydophila felis).